We begin with the raw amino-acid sequence, 483 residues long: MGQLVSFIGEIPAIVHEALNVALIAVSIIAIMKGLINIWKSGLFQLIMFLILAGRSCSISIGHHLELQHFIINSTSLLPSMPTLCRINATNSLIRGPFSAQWGLDIFIGDLTILVNPEPGSKTKRMTATNITGCFPNNEDPDSVAQVLSWFFRGVHHDFHLDPTILCDESVTVFRIQMNLTERMYCDRIVSKLARLFGSFGDYCSKVGKKLVIIRNVTWSNQCHEDHVGSMQLILQNAHNQVMRFRKLQNFFSWSLVDSAGNSMPGGYCLEKWMLVASELKCFGNTAVAKCNINHDSEFCDMLRLFDYNKKAIVNLQDKTKAQLDSLIDAVNSLISDNLITKNKIRELMNIPYCNYTKFWYVNHTGLNVHSLPKCWHVRNGSYLNESDFRNEWIIESDHLVSEILAKEYEERQKRTPLSLVDLCFWSTLFYTASIFLHLLHIPTHRHIIGEGCPKPHRLTSDSLCACGFFQLKGRPTRWARIP.

G2 carries the N-myristoyl glycine; by host lipid modification. Over 2–17 (GQLVSFIGEIPAIVHE) the chain is Extracellular. The helical transmembrane segment at 18-32 (ALNVALIAVSIIAIM) threads the bilayer. Residue K33 is a topological domain, cytoplasmic. A helical transmembrane segment spans residues 34-53 (GLINIWKSGLFQLIMFLILA). Extracellular segments lie at residues 54-58 (GRSCS) and 59-422 (ISIG…SLVD). C57 contributes to the Zn(2+) binding site. N73, N88, N130, and N179 each carry an N-linked (GlcNAc...) asparagine; by host glycan. Disulfide bonds link C85-C223, C186-C204, C269-C282, C291-C300, and C354-C375. Residue N216 is glycosylated (N-linked (GlcNAc...) asparagine; by host). N-linked (GlcNAc...) asparagine; by host glycosylation is found at N355, N363, N380, and N385. The chain crosses the membrane as a helical span at residues 423-443 (LCFWSTLFYTASIFLHLLHIP). Over 444 to 483 (THRHIIGEGCPKPHRLTSDSLCACGFFQLKGRPTRWARIP) the chain is Cytoplasmic. Positions 445, 447, 453, 457, 465, and 467 each coordinate Zn(2+).

This sequence belongs to the arenaviridae GPC protein family. In terms of assembly, homotetramer; disulfide-linked. Homotetramer. GP2 homotetramers bind through ionic interactions with GP1 homotetramers to form the GP complex together with the stable signal peptide. The GP-C polyprotein interacts with the host protease MBTPS1/SKI-1 resulting in the polyprotein processing. In terms of processing, specific enzymatic cleavages in vivo yield mature proteins. GP-C polyprotein is cleaved in the endoplasmic reticulum by the host protease MBTPS1. Only cleaved glycoprotein is incorporated into virions. The SSP remains stably associated with the GP complex following cleavage by signal peptidase and plays crucial roles in the trafficking of GP through the secretory pathway. Post-translationally, myristoylation is necessary for GP2-mediated fusion activity.

Its subcellular location is the virion membrane. The protein localises to the host endoplasmic reticulum membrane. It localises to the host Golgi apparatus membrane. The protein resides in the host cell membrane. Functionally, class I viral fusion protein that directs fusion of viral and host endosomal membranes, leading to delivery of the nucleocapsid into the cytoplasm. Membrane fusion is mediated by irreversible conformational changes induced upon acidification in the endosome. Stable signal peptide (SSP): cleaved and functions as a signal peptide. In addition, it is also retained as the third component of the GP complex. The SSP is required for efficient glycoprotein expression, post-translational maturation cleavage of GP1 and GP2, glycoprotein transport to the cell surface plasma membrane, formation of infectious virus particles, and acid pH-dependent glycoprotein-mediated cell fusion. In terms of biological role, interacts with the host receptor. The chain is Pre-glycoprotein polyprotein GP complex from Peromyscus californicus (California mouse).